Reading from the N-terminus, the 326-residue chain is Protein BugT (326 aa).

Residues 1–25 form the signal peptide; it reads MNMTRLLAVIGIFIATAGIAAPVSA.

The protein belongs to the UPF0065 (bug) family.

The protein resides in the periplasm. This chain is Protein BugT (bugT), found in Bordetella pertussis (strain Tohama I / ATCC BAA-589 / NCTC 13251).